The primary structure comprises 255 residues: Thiazole synthase (255 aa).

Lysine 95 acts as the Schiff-base intermediate with DXP in catalysis. 1-deoxy-D-xylulose 5-phosphate contacts are provided by residues glycine 156, alanine 182–glycine 183, and asparagine 204–threonine 205.

This sequence belongs to the ThiG family. In terms of assembly, homotetramer. Forms heterodimers with either ThiH or ThiS.

It localises to the cytoplasm. The catalysed reaction is [ThiS sulfur-carrier protein]-C-terminal-Gly-aminoethanethioate + 2-iminoacetate + 1-deoxy-D-xylulose 5-phosphate = [ThiS sulfur-carrier protein]-C-terminal Gly-Gly + 2-[(2R,5Z)-2-carboxy-4-methylthiazol-5(2H)-ylidene]ethyl phosphate + 2 H2O + H(+). Its pathway is cofactor biosynthesis; thiamine diphosphate biosynthesis. Functionally, catalyzes the rearrangement of 1-deoxy-D-xylulose 5-phosphate (DXP) to produce the thiazole phosphate moiety of thiamine. Sulfur is provided by the thiocarboxylate moiety of the carrier protein ThiS. In vitro, sulfur can be provided by H(2)S. In Vibrio campbellii (strain ATCC BAA-1116), this protein is Thiazole synthase.